The sequence spans 674 residues: MTSEAPRVKNKNPAPIQISAEQLLREAVERQDVAFVPPKINITDLEELQEFQGRKRKEFEDAIRRNRLAMGHWMRYGQWELDQKEFARARSVFERALDVDSTYIPLWLKYIECEMKNRNINHARNLFDRAVTQLPRVDKLWYKYVYMEEMLGNITGCRQVFERWLKWEPDENCWMSYIRMERRYHENERARGIYERFVVVHPEVTNWLRWARFEEECGNAANVRQVYLAAIDALGQEFLNERFFIAFAKFEIRQKEYERARTIFKYAIDFMPRSKSMELYKEYTHFEKQFGDHLGVESTVLDKRRLQYEKLLKDSPYDYDTWLDLLKLEESAGDINTIRETYEKAIAKVPEVVEKNAWRRYVYIWLNYCLFEEIDVKDVDRARKVYQEALKLIPHKKFTFAKLWLMYAMFELRQRKIDVARKTLGRALGMCPKPKLFRGYIEFEDAIKQFDRCRILYEKWILYDPEACAPWLGYAALETKLGDSDRARALYNLAVNQPILETPELVWKAYIDFEFEEMEYGKARSIYQQLLRTAPHVKVWISFANFEIAHLEDDDEEPPNEEVASPTAVVRARNVFENALAHLRQQGLKEERVVLLEAWKQFEAMHGTEDTRKHVSSLMPQVVKKRRRLEDGSFEEYLDYLFPDTATDQGDKMRKMLELSRKWKEEMAKKKLEA.

HAT repeat units lie at residues 50-82, 84-116, 118-150, 152-183, 185-216, 218-253, 255-289, 299-331, 333-367, 377-413, 415-446, 448-480, 482-516, 518-549, 567-608, and 610-643; these read EFQG…WELD, KEFA…CEMK, RNIN…MEEM, GNIT…MERR, HENE…FEEE, GNAA…FEIR, KEYE…FEKQ, TVLD…LEES, GDIN…IWLN, KDVD…FELR, RKID…FEDA, KQFD…LETK, GDSD…FEFE, MEYG…FEIA, TAVV…MHGT, and DTRK…YLFP.

It belongs to the crooked-neck family. Belongs to the 40S cdc5-associated complex (or cwf complex), a spliceosome sub-complex reminiscent of a late-stage spliceosome composed of the U2, U5 and U6 snRNAs and at least brr2, cdc5, cwf2/prp3, cwf3/syf1, cwf4/syf3, cwf5/ecm2, spp42/cwf6, cwf7/spf27, cwf8, cwf9, cwf10, cwf11, cwf12, prp45/cwf13, cwf14, cwf15, cwf16, cwf17, cwf18, cwf19, cwf20, cwf21, cwf22, cwf23, cwf24, cwf25, cwf26, cyp7/cwf27, cwf28, cwf29/ist3, lea1, msl1, prp5/cwf1, prp10, prp12/sap130, prp17, prp22, sap61, sap62, sap114, sap145, slu7, smb1, smd1, smd3, smf1, smg1 and syf2.

The protein resides in the nucleus. In terms of biological role, involved in pre-mRNA splicing and cell cycle progression. Required for the spliceosome assembly and initiation of the DNA replication. In Schizosaccharomyces pombe (strain 972 / ATCC 24843) (Fission yeast), this protein is Pre-mRNA-splicing factor cwf4 (cwf4).